The chain runs to 681 residues: Cadmium, zinc and cobalt-transporting ATPase (681 aa).

The HMA domain occupies 1-66; the sequence is MQKYHFTGLD…LEPDMELSEQ (66 aa). Residues 1 to 72 lie on the Cytoplasmic side of the membrane; that stretch reads MQKYHFTGLD…LSEQVQSEAK (72 aa). Cd(2+)-binding residues include Cys-11 and Cys-14. 2 residues coordinate Co(2+): Cys-11 and Cys-14. Zn(2+) contacts are provided by Cys-11 and Cys-14. Residues 73–92 form a helical membrane-spanning segment; sequence PSAIPLLLSVVLYLIAVATI. Topologically, residues 93–102 are extracellular; that stretch reads HFSAQNWALH. A helical transmembrane segment spans residues 103 to 124; the sequence is LSYALLAGVYLVAGKDVFLGAL. Residues 125-131 lie on the Cytoplasmic side of the membrane; that stretch reads RAIRNKQ. Residues 132–151 traverse the membrane as a helical segment; the sequence is FFDENTLMLSATIAAFGVGA. The Extracellular segment spans residues 152-154; sequence HEE. A helical membrane pass occupies residues 155 to 174; the sequence is AVSIMVFYSAGEFLQQLAIA. Residues 175–308 are Cytoplasmic-facing; it reads RSKQSLHALL…ITTFARYYTP (134 aa). A helical membrane pass occupies residues 309–327; sequence AVFAIALLIALVPPLLGHG. Residues 328 to 332 lie on the Extracellular side of the membrane; it reads DFDTW. The chain crosses the membrane as a helical span at residues 333–350; that stretch reads IYRGLFALMVSCPCALVI. The Cytoplasmic segment spans residues 351–630; the sequence is SVPLGYFGGV…VFKIAKKTKR (280 aa). The active-site 4-aspartylphosphate intermediate is the Asp-388. 2 residues coordinate Mg(2+): Asp-578 and Asp-582. The helical transmembrane segment at 631–652 threads the bilayer; the sequence is IIIENIIFALAIKAMFIVLGLS. The Extracellular segment spans residues 653–660; it reads GDASLWEA. Residues 661-676 traverse the membrane as a helical segment; it reads VLGDVGVTLIALANSM. The Cytoplasmic portion of the chain corresponds to 677-681; the sequence is RTMRI.

This sequence belongs to the cation transport ATPase (P-type) (TC 3.A.3) family. Type IB subfamily.

It is found in the cell membrane. It carries out the reaction Zn(2+)(in) + ATP + H2O = Zn(2+)(out) + ADP + phosphate + H(+). The enzyme catalyses Cd(2+)(in) + ATP + H2O = Cd(2+)(out) + ADP + phosphate + H(+). Its function is as follows. Couples the hydrolysis of ATP with the transport of cadmium, zinc and cobalt out of the cell. This chain is Cadmium, zinc and cobalt-transporting ATPase (cadA), found in Helicobacter felis.